Consider the following 115-residue polypeptide: NADH-ubiquinone oxidoreductase chain 3 (115 aa).

The next 3 membrane-spanning stretches (helical) occupy residues 4–24 (MLILLMNIALAAILISLAFWL), 55–75 (FFLVAITFLLFDLEIALLLPL), and 86–106 (MLMTMAFILITILALGLAYEW).

Belongs to the complex I subunit 3 family. In terms of assembly, core subunit of respiratory chain NADH dehydrogenase (Complex I) which is composed of 45 different subunits. Interacts with TMEM186. Interacts with TMEM242.

Its subcellular location is the mitochondrion inner membrane. The catalysed reaction is a ubiquinone + NADH + 5 H(+)(in) = a ubiquinol + NAD(+) + 4 H(+)(out). Its function is as follows. Core subunit of the mitochondrial membrane respiratory chain NADH dehydrogenase (Complex I) which catalyzes electron transfer from NADH through the respiratory chain, using ubiquinone as an electron acceptor. Essential for the catalytic activity of complex I. In Microtus pennsylvanicus (Meadow vole), this protein is NADH-ubiquinone oxidoreductase chain 3.